The sequence spans 571 residues: MKIFVASAWPYVNAVPHLGNLIGSVLSADVFARYARLKYGQENVVFVSGSDEHGTPIEVEAKKRNVNPKELTDQAHEYDKKLFLDVWEISYNNYTRTESEIHKTFVRDFMLKLEKYIKIEEDEIPYCEYDKIYLPDRFVKGTCPYCGFEDARGDQCDNCGRLLTPRLLVNPKCVLCGRTPVFKKTKHWFFDLSAFNDKIEEWIKNSQTLPENVKSVALSWVKEGLKPRSITRDNAWGIPAPFEGAEGKTIYVWFEALLGYISATIEYFKKIGKEEEWKKFWFGNDVKSYYFIGKDNIPFHAVILPAMLMASGENYVLPTVIAATEYLLYEGQKFSKSRKIGVWIDEAPQLLDIEYWRFILIRLRPEERDTNFTWREALRIVNTELNDDIGNYANRVLSMVRRYFNGEVPQIKYEKLKDEDTKFISEIKEAPKKMSELFELGKLKAGSEEILKLARNGNSYLNIRAPWNLIKNDKEEAGNVLNIAVNSLRTLSIMLYPLMPKSAEKLYNMLGFKDIEREKWDLAGELVIKSNHKINEVSVLFKKVELNENDINKKLDEIRKNLEKIRPTLLR.

The 'HIGH' region signature appears at 10–20; that stretch reads PYVNAVPHLGN. Zn(2+)-binding residues include Cys-143, Cys-146, Cys-156, and Cys-159. The 'KMSKS' region motif lies at 333 to 337; it reads KFSKS. Position 336 (Lys-336) interacts with ATP.

The protein belongs to the class-I aminoacyl-tRNA synthetase family. MetG type 1 subfamily. It depends on Zn(2+) as a cofactor.

It localises to the cytoplasm. It carries out the reaction tRNA(Met) + L-methionine + ATP = L-methionyl-tRNA(Met) + AMP + diphosphate. Its function is as follows. Is required not only for elongation of protein synthesis but also for the initiation of all mRNA translation through initiator tRNA(fMet) aminoacylation. In Sulfurisphaera tokodaii (strain DSM 16993 / JCM 10545 / NBRC 100140 / 7) (Sulfolobus tokodaii), this protein is Methionine--tRNA ligase.